Consider the following 371-residue polypeptide: tRNA-specific 2-thiouridylase MnmA (371 aa).

ATP-binding positions include 11–18 (GMSGGVDS) and methionine 37. The interaction with target base in tRNA stretch occupies residues 97–99 (NPD). Cysteine 102 (nucleophile) is an active-site residue. Cysteine 102 and cysteine 199 are oxidised to a cystine. Glycine 127 is a binding site for ATP. An interaction with tRNA region spans residues 149–151 (KDQ). Residue cysteine 199 is the Cysteine persulfide intermediate of the active site. An interaction with tRNA region spans residues 311 to 312 (RY).

It belongs to the MnmA/TRMU family.

Its subcellular location is the cytoplasm. The enzyme catalyses S-sulfanyl-L-cysteinyl-[protein] + uridine(34) in tRNA + AH2 + ATP = 2-thiouridine(34) in tRNA + L-cysteinyl-[protein] + A + AMP + diphosphate + H(+). In terms of biological role, catalyzes the 2-thiolation of uridine at the wobble position (U34) of tRNA, leading to the formation of s(2)U34. This Idiomarina loihiensis (strain ATCC BAA-735 / DSM 15497 / L2-TR) protein is tRNA-specific 2-thiouridylase MnmA.